We begin with the raw amino-acid sequence, 578 residues long: MKDTIRQLIQQALTQLVTDGVLPEGLSPAIQVENARDKTHGDFASNIAMMLAKPAGMKPRDLAEKLINALPASADISKVEIAGPGFLNFFQNTDALANRLDAALADAHLGARKAGPAQKVVIDMSAPNLAKEMHVGHLRSTIIGDSVARVLEFLGDNVIRQNHVGDWGTQFGMLMAYLQENPITSDELSDLENFYRAAKKRFDESEEFATRARGLVVKLQAGDPECLALWTRFKDISLSHCQKTYELLNVKLTMADVMGESAYNDDLANVVADLKAKGLLVEDQGAQCVFLEEFKNSDGDPLPVIVQKADGGYLYATTDLAAVRYRSNVLKADRALYFVDQRQALHFNQVFEVARRAGFVGHPMQMEHMGFGTMNGADGRPFKTRDGGTVKLIDLLTEAKERAYALVKEKNPSLADDELRHIGEVVGIGAVKYADLSKHRTSDYSFNFELMLNFEGNTAPYLLYAYTRVAGVFRKLGKGFDEVDGKIVLQAAHEQDLAARLAQFGEILNNVAEKGTPHVLCSYLYDLAGLFSSFYENCPILAAETPSQQQSRLRLAALTGRTLKQGLELLGLETLERM.

Positions 127–137 (PNLAKEMHVGH) match the 'HIGH' region motif.

This sequence belongs to the class-I aminoacyl-tRNA synthetase family. Monomer.

It is found in the cytoplasm. It catalyses the reaction tRNA(Arg) + L-arginine + ATP = L-arginyl-tRNA(Arg) + AMP + diphosphate. This is Arginine--tRNA ligase from Pseudomonas putida (strain ATCC 47054 / DSM 6125 / CFBP 8728 / NCIMB 11950 / KT2440).